Consider the following 1515-residue polypeptide: Lysophospholipase nte1 (1515 aa).

Over 1-59 (MESLSNLGNAMSSVLSETTSTTATAILADPTEALSSVVALASDAVSKATSDVVPEHTPT) the chain is Cytoplasmic. A helical transmembrane segment spans residues 60–80 (SWFTIILWLLHRISSVLYFVI). Residues 81-102 (KLTTITTPTFLFNIFSTSLTVT) are Lumenal-facing. A helical transmembrane segment spans residues 103-123 (MNATTLVLIMLFMMAGVTWVV). Residues 124–1515 (RYRYLNMYSR…RTMAPRRASI (1392 aa)) lie on the Cytoplasmic side of the membrane. 3 disordered regions span residues 278–303 (MHDT…GYPM), 519–580 (VTAT…TPRN), and 617–639 (VNPD…SRGG). 2 stretches are compositionally biased toward polar residues: residues 543–554 (LTNTQQLKSGPA) and 566–579 (PRPQ…STPR). A nucleoside 3',5'-cyclic phosphate is bound by residues 670–789 (SPVP…LAGY) and 835–955 (RLTE…IAAR). The PNPLA domain occupies 1212 to 1376 (LVLGGGGARG…IDNLTVSRMK (165 aa)). A GXGXXG motif is present at residues 1216 to 1221 (GGGARG). Positions 1243 to 1247 (GTSIG) match the GXSXG motif. The active-site Nucleophile is serine 1245. Residue aspartate 1363 is the Proton acceptor of the active site. Residues 1363–1365 (DGG) carry the DGA/G motif.

The protein belongs to the NTE family.

It localises to the endoplasmic reticulum membrane. It carries out the reaction a 1-acyl-sn-glycero-3-phosphocholine + H2O = sn-glycerol 3-phosphocholine + a fatty acid + H(+). Inhibited by organophosphorus esters. Functionally, intracellular phospholipase B that catalyzes the double deacylation of phosphatidylcholine (PC) to glycerophosphocholine (GroPCho). Plays an important role in membrane lipid homeostasis. Responsible for the rapid PC turnover in response to inositol, elevated temperatures, or when choline is present in the growth medium. This chain is Lysophospholipase nte1 (nte1), found in Neurospora crassa (strain ATCC 24698 / 74-OR23-1A / CBS 708.71 / DSM 1257 / FGSC 987).